A 102-amino-acid chain; its full sequence is NADH-quinone oxidoreductase subunit K (102 aa).

The next 3 helical transmembrane spans lie at 5 to 25 (LGHFLSLGAMLFALSVIGIFL), 31 to 51 (IVLLMAIELMLLAVNMNFVAF), and 62 to 82 (VFVFFILTVAAAESAIGLAIL).

This sequence belongs to the complex I subunit 4L family. In terms of assembly, NDH-1 is composed of 14 different subunits. Subunits NuoA, H, J, K, L, M, N constitute the membrane sector of the complex.

Its subcellular location is the cell inner membrane. It carries out the reaction a quinone + NADH + 5 H(+)(in) = a quinol + NAD(+) + 4 H(+)(out). Functionally, NDH-1 shuttles electrons from NADH, via FMN and iron-sulfur (Fe-S) centers, to quinones in the respiratory chain. The immediate electron acceptor for the enzyme in this species is believed to be ubiquinone. Couples the redox reaction to proton translocation (for every two electrons transferred, four hydrogen ions are translocated across the cytoplasmic membrane), and thus conserves the redox energy in a proton gradient. The sequence is that of NADH-quinone oxidoreductase subunit K from Paracidovorax citrulli (strain AAC00-1) (Acidovorax citrulli).